The primary structure comprises 48 residues: uncharacterized protein (48 aa).

A helical transmembrane segment spans residues 25–47; sequence TFASIGVTVGVQIVILLIWGLSW.

It is found in the membrane. This is an uncharacterized protein from Archaeoglobus fulgidus (strain ATCC 49558 / DSM 4304 / JCM 9628 / NBRC 100126 / VC-16).